The following is a 66-amino-acid chain: Large ribosomal subunit protein bL35 (66 aa).

Basic residues predominate over residues 1–16; the sequence is MPKQKTHRASAKRFKR. The disordered stretch occupies residues 1–21; that stretch reads MPKQKTHRASAKRFKRTGSGG.

Belongs to the bacterial ribosomal protein bL35 family.

The sequence is that of Large ribosomal subunit protein bL35 from Streptococcus mutans serotype c (strain ATCC 700610 / UA159).